The primary structure comprises 714 residues: Fatty acid oxidation complex subunit alpha (714 aa).

Positions 1–190 (MEMASAFTLN…KLGLVDDVVP (190 aa)) are enoyl-CoA hydratase. Residues 306 to 714 (APLNSVGILG…FWKTTATDLQ (409 aa)) are 3-hydroxyacyl-CoA dehydrogenase.

This sequence in the N-terminal section; belongs to the enoyl-CoA hydratase/isomerase family. It in the central section; belongs to the 3-hydroxyacyl-CoA dehydrogenase family. As to quaternary structure, heterotetramer of two alpha chains (FadJ) and two beta chains (FadI).

Its subcellular location is the cytoplasm. The catalysed reaction is a (3S)-3-hydroxyacyl-CoA = a (2E)-enoyl-CoA + H2O. It carries out the reaction a 4-saturated-(3S)-3-hydroxyacyl-CoA = a (3E)-enoyl-CoA + H2O. The enzyme catalyses a (3S)-3-hydroxyacyl-CoA + NAD(+) = a 3-oxoacyl-CoA + NADH + H(+). It catalyses the reaction (3S)-3-hydroxybutanoyl-CoA = (3R)-3-hydroxybutanoyl-CoA. Its pathway is lipid metabolism; fatty acid beta-oxidation. Its function is as follows. Catalyzes the formation of a hydroxyacyl-CoA by addition of water on enoyl-CoA. Also exhibits 3-hydroxyacyl-CoA epimerase and 3-hydroxyacyl-CoA dehydrogenase activities. The sequence is that of Fatty acid oxidation complex subunit alpha from Escherichia coli O17:K52:H18 (strain UMN026 / ExPEC).